A 206-amino-acid polypeptide reads, in one-letter code: uncharacterized protein (206 aa).

One can recognise a YrdC-like domain in the interval 14–200 (QRLINQAVEI…TPVVVREGVG (187 aa)).

The protein belongs to the SUA5 family.

This is an uncharacterized protein from Escherichia coli O6:H1 (strain CFT073 / ATCC 700928 / UPEC).